We begin with the raw amino-acid sequence, 892 residues long: Inner centromere protein B (892 aa).

Disordered regions lie at residues A50–T124, E160–T182, L255–V286, K305–H470, K502–D555, Q569–E687, E702–A760, and N797–P819. The span at S60–T69 shows a compositional bias: basic residues. Residues S90–R99 are compositionally biased toward low complexity. Residues Q259–G272 are compositionally biased toward polar residues. Over residues K305–R315 the composition is skewed to basic and acidic residues. A compositionally biased stretch (basic residues) spans K316–K326. Low complexity predominate over residues S332–S343. Basic and acidic residues predominate over residues R431–E444. The segment covering P455–H470 has biased composition (pro residues). 4 stretches are compositionally biased toward basic and acidic residues: residues P509–D555, Q569–A602, K609–E687, and E702–E754. The tract at residues K512–Q725 is SAH. The IN box stretch occupies residues L802–P876. Residues S869 and S870 each carry the phosphoserine modification.

This sequence belongs to the INCENP family. Component of the CPC at least composed of survivin/birc5, incenp, cdca8/borealin and/or cdca9/dasra-A, and aurkb/aurora-B. Interacts (via C-terminus) with aurkb (via N-terminus and kinase domain). Interacts (via N-terminus) with birc5.1, birc5.2, cdca8 and cdca9. Interacts with mtus1.

The protein resides in the nucleus. The protein localises to the chromosome. Its subcellular location is the centromere. It is found in the cytoplasm. It localises to the cytoskeleton. The protein resides in the spindle. The protein localises to the midbody. Its subcellular location is the kinetochore. In terms of biological role, component of the chromosomal passenger complex (CPC), a complex that acts as a key regulator of mitosis. The CPC complex has essential functions at the centromere in ensuring correct chromosome alignment and segregation and is required for chromatin-induced microtubule stabilization and spindle assembly. Acts as a scaffold regulating CPC localization and activity. The C-terminus associates with aurkb/aurora-B, the N-terminus associated with cdca8/borealin and/or cdca9/dasra-A tethers the CPC to the inner centromere, and the microtubule binding activity within the central SAH domain directs aurkb/aurora-B toward substrates near microtubules. Activates aurkb. The chain is Inner centromere protein B (incenp-b) from Xenopus laevis (African clawed frog).